Reading from the N-terminus, the 188-residue chain is HGPRTase-like protein 1 (188 aa).

This sequence belongs to the purine/pyrimidine phosphoribosyltransferase family. Archaeal HPRT subfamily.

Its function is as follows. May catalyze a purine salvage reaction, the substrate is unknown. The protein is HGPRTase-like protein 1 of Haloquadratum walsbyi (strain DSM 16854 / JCM 12705 / C23).